The sequence spans 1025 residues: Error-prone DNA polymerase (1025 aa).

This sequence belongs to the DNA polymerase type-C family. DnaE2 subfamily.

It is found in the cytoplasm. It catalyses the reaction DNA(n) + a 2'-deoxyribonucleoside 5'-triphosphate = DNA(n+1) + diphosphate. Functionally, DNA polymerase involved in damage-induced mutagenesis and translesion synthesis (TLS). It is not the major replicative DNA polymerase. In Pseudomonas fluorescens (strain Pf0-1), this protein is Error-prone DNA polymerase.